Consider the following 197-residue polypeptide: MSEKTIAVKAQKVDEVADMFSNSVSAVVADVRGLTVAQADDLRAQLRDEGVSLKVIKNKILTRAAEKAGYQELNDLFKGPSAIAFSKEDVVAPARILKKFSGTADALELKGGVIDRKVADLDTINRYAALPSKETLLQQLLAEFQSPLRSFMYAVKAVAEKREADGETAETPAQETASDDSKSTKAEASDASTTENK.

Residues 162–197 (READGETAETPAQETASDDSKSTKAEASDASTTENK) are disordered. Positions 179–188 (DDSKSTKAEA) are enriched in basic and acidic residues.

It belongs to the universal ribosomal protein uL10 family. In terms of assembly, part of the ribosomal stalk of the 50S ribosomal subunit. The N-terminus interacts with L11 and the large rRNA to form the base of the stalk. The C-terminus forms an elongated spine to which L12 dimers bind in a sequential fashion forming a multimeric L10(L12)X complex.

In terms of biological role, forms part of the ribosomal stalk, playing a central role in the interaction of the ribosome with GTP-bound translation factors. The chain is Large ribosomal subunit protein uL10 from Oenococcus oeni (strain ATCC BAA-331 / PSU-1).